We begin with the raw amino-acid sequence, 233 residues long: UPF0502 protein YPTS_2082 (233 aa).

Belongs to the UPF0502 family.

The polypeptide is UPF0502 protein YPTS_2082 (Yersinia pseudotuberculosis serotype IB (strain PB1/+)).